Consider the following 65-residue polypeptide: UPF0370 protein Ent638_2968 (65 aa).

A helical membrane pass occupies residues 4–24 (LSKYWWILVLVFLVGVLLNVI). Positions 39 to 65 (KPELPPHRDFNDKWDDDDNWPKKDQKK) are disordered. Positions 42 to 65 (LPPHRDFNDKWDDDDNWPKKDQKK) are enriched in basic and acidic residues.

It belongs to the UPF0370 family.

It localises to the cell membrane. In Enterobacter sp. (strain 638), this protein is UPF0370 protein Ent638_2968.